Consider the following 364-residue polypeptide: Tyrosine-protein phosphatase YVH1 (364 aa).

In terms of domain architecture, Tyrosine-protein phosphatase spans 11 to 173; the sequence is EVTRILGGIY…LHLFEKMGGD (163 aa). C117 functions as the Phosphocysteine intermediate in the catalytic mechanism. Residue S196 is modified to Phosphoserine.

Belongs to the protein-tyrosine phosphatase family. Non-receptor class dual specificity subfamily.

It catalyses the reaction O-phospho-L-tyrosyl-[protein] + H2O = L-tyrosyl-[protein] + phosphate. May be directly involved in signal transduction and/or cell cycle regulation. It is necessary for maintaining growth rate or spore germination. Could show both activity toward tyrosine-protein phosphate as well as with serine-protein phosphate. The protein is Tyrosine-protein phosphatase YVH1 (YVH1) of Saccharomyces cerevisiae (strain ATCC 204508 / S288c) (Baker's yeast).